Reading from the N-terminus, the 63-residue chain is Large ribosomal subunit protein bL28 (63 aa).

The protein belongs to the bacterial ribosomal protein bL28 family.

This chain is Large ribosomal subunit protein bL28, found in Treponema denticola (strain ATCC 35405 / DSM 14222 / CIP 103919 / JCM 8153 / KCTC 15104).